Reading from the N-terminus, the 468-residue chain is uncharacterized protein (468 aa).

Positions 1-22 (MVKRSSHRQVVLDEDDEENYNN) are disordered. An RING-type zinc finger spans residues 85 to 123 (CPICTEALQRPFTTHCGHTYCYECLLNWLKESKSCPTCR). Residues 386 to 402 (DSLNSSSNNSPSHNNIH) are compositionally biased toward low complexity. The disordered stretch occupies residues 386-468 (DSLNSSSNNS…TIQLDSDEES (83 aa)). Over residues 417–434 (IVTNGTGLRSSQSSSQNR) the composition is skewed to polar residues.

It localises to the nucleus. This is an uncharacterized protein from Schizosaccharomyces pombe (strain 972 / ATCC 24843) (Fission yeast).